A 401-amino-acid polypeptide reads, in one-letter code: Probable tRNA sulfurtransferase (401 aa).

Residues glutamate 60–aspartate 165 form the THUMP domain. Residues methionine 183 to isoleucine 184, histidine 208 to phenylalanine 209, arginine 265, glycine 287, and glutamine 296 each bind ATP.

This sequence belongs to the ThiI family.

Its subcellular location is the cytoplasm. The enzyme catalyses [ThiI sulfur-carrier protein]-S-sulfanyl-L-cysteine + a uridine in tRNA + 2 reduced [2Fe-2S]-[ferredoxin] + ATP + H(+) = [ThiI sulfur-carrier protein]-L-cysteine + a 4-thiouridine in tRNA + 2 oxidized [2Fe-2S]-[ferredoxin] + AMP + diphosphate. It carries out the reaction [ThiS sulfur-carrier protein]-C-terminal Gly-Gly-AMP + S-sulfanyl-L-cysteinyl-[cysteine desulfurase] + AH2 = [ThiS sulfur-carrier protein]-C-terminal-Gly-aminoethanethioate + L-cysteinyl-[cysteine desulfurase] + A + AMP + 2 H(+). It functions in the pathway cofactor biosynthesis; thiamine diphosphate biosynthesis. In terms of biological role, catalyzes the ATP-dependent transfer of a sulfur to tRNA to produce 4-thiouridine in position 8 of tRNAs, which functions as a near-UV photosensor. Also catalyzes the transfer of sulfur to the sulfur carrier protein ThiS, forming ThiS-thiocarboxylate. This is a step in the synthesis of thiazole, in the thiamine biosynthesis pathway. The sulfur is donated as persulfide by IscS. This is Probable tRNA sulfurtransferase from Bacillus licheniformis (strain ATCC 14580 / DSM 13 / JCM 2505 / CCUG 7422 / NBRC 12200 / NCIMB 9375 / NCTC 10341 / NRRL NRS-1264 / Gibson 46).